Consider the following 524-residue polypeptide: GMP synthase [glutamine-hydrolyzing] (524 aa).

A Glutamine amidotransferase type-1 domain is found at 5-195 (KVIVIDFGGQ…VRGVCGCAGT (191 aa)). Cys-82 (nucleophile) is an active-site residue. Catalysis depends on residues His-169 and Glu-171. A GMPS ATP-PPase domain is found at 196 to 389 (WKMDAFVENT…LGIPEHLVFR (194 aa)). 223–229 (SGGVDSS) lines the ATP pocket.

As to quaternary structure, homodimer.

It catalyses the reaction XMP + L-glutamine + ATP + H2O = GMP + L-glutamate + AMP + diphosphate + 2 H(+). Its pathway is purine metabolism; GMP biosynthesis; GMP from XMP (L-Gln route): step 1/1. Its function is as follows. Catalyzes the synthesis of GMP from XMP. This is GMP synthase [glutamine-hydrolyzing] from Lachnospira eligens (strain ATCC 27750 / DSM 3376 / VPI C15-48 / C15-B4) (Eubacterium eligens).